We begin with the raw amino-acid sequence, 725 residues long: Catalase-peroxidase 1 (725 aa).

Positions 96 to 224 form a cross-link, tryptophyl-tyrosyl-methioninium (Trp-Tyr) (with M-250); it reads WHSAGSYRLA…LAAVQMGLIY (129 aa). His97 (proton acceptor) is an active-site residue. The tryptophyl-tyrosyl-methioninium (Tyr-Met) (with W-96) cross-link spans 224–250; it reads YVNPEGVDGNPDPLRTAKDVRETFKRM. Residue His265 coordinates heme b.

It belongs to the peroxidase family. Peroxidase/catalase subfamily. As to quaternary structure, homodimer or homotetramer. It depends on heme b as a cofactor. Post-translationally, formation of the three residue Trp-Tyr-Met cross-link is important for the catalase, but not the peroxidase activity of the enzyme.

The catalysed reaction is H2O2 + AH2 = A + 2 H2O. It catalyses the reaction 2 H2O2 = O2 + 2 H2O. Functionally, bifunctional enzyme with both catalase and broad-spectrum peroxidase activity. In Idiomarina loihiensis (strain ATCC BAA-735 / DSM 15497 / L2-TR), this protein is Catalase-peroxidase 1.